Here is a 440-residue protein sequence, read N- to C-terminus: Glutamyl-tRNA reductase (440 aa).

Substrate is bound by residues Thr55 to Arg58, Ser115, Glu120 to Gln122, and Gln126. Cys56 acts as the Nucleophile in catalysis. Gly199 to Gly204 provides a ligand contact to NADP(+).

It belongs to the glutamyl-tRNA reductase family. In terms of assembly, homodimer.

The catalysed reaction is (S)-4-amino-5-oxopentanoate + tRNA(Glu) + NADP(+) = L-glutamyl-tRNA(Glu) + NADPH + H(+). Its pathway is porphyrin-containing compound metabolism; protoporphyrin-IX biosynthesis; 5-aminolevulinate from L-glutamyl-tRNA(Glu): step 1/2. In terms of biological role, catalyzes the NADPH-dependent reduction of glutamyl-tRNA(Glu) to glutamate 1-semialdehyde (GSA). The protein is Glutamyl-tRNA reductase of Helicobacter hepaticus (strain ATCC 51449 / 3B1).